The primary structure comprises 37 residues: Pi-theraphotoxin-Hm3a (37 aa).

3 disulfide bridges follow: Cys3/Cys18, Cys10/Cys23, and Cys17/Cys33.

The protein belongs to the psalmotoxin-1 family. Expressed by the venom gland.

It is found in the secreted. In terms of biological role, this toxin acts on different isoforms of acid-sensing ion channel ASIC1 in a similar manner to psalmotoxin-1 (AC P60514). On ASIC1a homotrimer, it provokes a pH-dependent inhibition (IC(50)=39.7 nM on human and IC(50)=1.3 nM on rat channels), whereas it potentiates ASIC1b homotrimer and ASIC1a-ASIC1b heterotrimer (EC(50)=178.1 nM on human ASIC1b, EC(50)=46.5 nM on rat ASIC1b and EC(50)=17.4 nM on rat ASIC1a-ASIC1b channels). On rat ASIC1a, it acts by inhibiting channel currents by shifting the pH of half-maximal effect (pH(50)) of steady-state desensitization and activation to more alkaline values. In Heteroscodra maculata (Togo starburst tarantula), this protein is Pi-theraphotoxin-Hm3a.